Here is a 68-residue protein sequence, read N- to C-terminus: Protein DsrB (68 aa).

Belongs to the DsrB family.

The polypeptide is Protein DsrB (Sodalis glossinidius (strain morsitans)).